The primary structure comprises 211 residues: tRNA (guanine-N(7)-)-methyltransferase (211 aa).

Positions 44, 69, 96, and 118 each coordinate S-adenosyl-L-methionine. The active site involves Asp-118. Lys-122 provides a ligand contact to substrate. Residues 124-129 (RHEKRR) are interaction with RNA. Residues Asp-154 and 191-194 (TEYE) contribute to the substrate site.

Belongs to the class I-like SAM-binding methyltransferase superfamily. TrmB family.

It catalyses the reaction guanosine(46) in tRNA + S-adenosyl-L-methionine = N(7)-methylguanosine(46) in tRNA + S-adenosyl-L-homocysteine. Its pathway is tRNA modification; N(7)-methylguanine-tRNA biosynthesis. In terms of biological role, catalyzes the formation of N(7)-methylguanine at position 46 (m7G46) in tRNA. This Streptococcus equi subsp. zooepidemicus (strain MGCS10565) protein is tRNA (guanine-N(7)-)-methyltransferase.